We begin with the raw amino-acid sequence, 657 residues long: uncharacterized protein (657 aa).

The signal sequence occupies residues 1–26 (MFGKGLVKKSLLFFSGVSTMAVFLVS). The N-palmitoyl cysteine moiety is linked to residue C27. The S-diacylglycerol cysteine moiety is linked to residue C27. 3 disordered regions span residues 291 to 316 (ISPK…FSST), 468 to 496 (RLSS…DGII), and 516 to 563 (KSMT…KETN). A compositionally biased stretch (polar residues) spans 294–304 (KQGSDNNSNLS). Basic and acidic residues predominate over residues 469–495 (LSSDDTNTKKALKEVSTHKNGSDKDGI). Polar residues predominate over residues 516–525 (KSMTDNNSGT). Over residues 526–545 (EQKKNLSEVDTKKKEKESKG) the composition is skewed to basic and acidic residues. A compositionally biased stretch (low complexity) spans 546 to 559 (KTQSNGQDSGQQNG).

To T.pallidum TmpC.

The protein localises to the cell membrane. This is an uncharacterized protein from Mycoplasma pneumoniae (strain ATCC 29342 / M129 / Subtype 1) (Mycoplasmoides pneumoniae).